Here is a 1604-residue protein sequence, read N- to C-terminus: Ubiquitin carboxyl-terminal hydrolase 32 (1604 aa).

EF-hand domains are found at residues 91–126 (KDEEKAKYIFSLFSSESGSYVVREEMERMLHVVDGK), 228–263 (IRPSLSEGLFNAFDENRDNHIDFKEISCGLSACCRG), and 264–299 (PLAERQKFCFKVFDVDRDGVLSRVELKDMVVALLEV). Residues aspartate 241, asparagine 243, aspartate 245, histidine 247, glutamate 252, aspartate 277, aspartate 279, aspartate 281, and glutamate 288 each contribute to the Ca(2+) site. A DUSP domain is found at 369 to 585 (ATPEEEGQII…SNLALPRPVI (217 aa)). The region spanning 734 to 1567 (TGLSNLGNTC…SAYILFYEQQ (834 aa)) is the USP domain. Residue cysteine 743 is the Nucleophile of the active site. Tyrosine 1173 is subject to Phosphotyrosine. Serine 1350 is subject to Phosphoserine. The tract at residues 1353–1432 (EEDVLLSKSP…SKENLDTSKE (80 aa)) is disordered. Over residues 1360 to 1370 (KSPSSLSANVT) the composition is skewed to polar residues. Positions 1371–1399 (SSPKGSPSSSRKSGASCPSSKNSSPNSSP) are enriched in low complexity. Phosphoserine occurs at positions 1372 and 1376. Residues 1415–1424 (GSKNKLSNSK) are compositionally biased toward polar residues. Serine 1454 bears the Phosphoserine mark. Positions 1484 to 1504 (SNGQLGNHSEEDSTDDQREET) are disordered. Basic and acidic residues predominate over residues 1491 to 1504 (HSEEDSTDDQREET). Catalysis depends on histidine 1526, which acts as the Proton acceptor. Phosphoserine is present on serine 1588. Cysteine 1601 carries the cysteine methyl ester modification. The S-farnesyl cysteine moiety is linked to residue cysteine 1601. Residues 1602-1604 (VLQ) constitute a propeptide, removed in mature form.

Belongs to the peptidase C19 family.

It is found in the golgi apparatus membrane. The enzyme catalyses Thiol-dependent hydrolysis of ester, thioester, amide, peptide and isopeptide bonds formed by the C-terminal Gly of ubiquitin (a 76-residue protein attached to proteins as an intracellular targeting signal).. Its function is as follows. Deubiquitinase that can remove conjugated ubiquitin from target proteins, such as RAB7A and LAMTOR1. Acts as a positive regulator of the mTORC1 signaling by mediating deubiquitination of LAMTOR1, thereby promoting the association between LAMTOR1 and the lysosomal V-ATPase complex and subsequent activation of the mTORC1 complex. This is Ubiquitin carboxyl-terminal hydrolase 32 from Mus musculus (Mouse).